The sequence spans 245 residues: DNA polymerase sliding clamp (245 aa).

Belongs to the PCNA family. Homotrimer. The subunits circularize to form a toroid; DNA passes through its center. Replication factor C (RFC) is required to load the toroid on the DNA.

Its function is as follows. Sliding clamp subunit that acts as a moving platform for DNA processing. Responsible for tethering the catalytic subunit of DNA polymerase and other proteins to DNA during high-speed replication. The protein is DNA polymerase sliding clamp of Methanococcoides burtonii (strain DSM 6242 / NBRC 107633 / OCM 468 / ACE-M).